The following is a 258-amino-acid chain: UDP-N-acetylenolpyruvoylglucosamine reductase (258 aa).

The active site involves Arg-142. Ser-184 (proton donor) is an active-site residue. Residue Glu-254 is part of the active site.

The protein belongs to the MurB family. FAD is required as a cofactor.

Its subcellular location is the cytoplasm. The enzyme catalyses UDP-N-acetyl-alpha-D-muramate + NADP(+) = UDP-N-acetyl-3-O-(1-carboxyvinyl)-alpha-D-glucosamine + NADPH + H(+). The protein operates within cell wall biogenesis; peptidoglycan biosynthesis. Functionally, cell wall formation. The sequence is that of UDP-N-acetylenolpyruvoylglucosamine reductase from Campylobacter jejuni (strain RM1221).